A 471-amino-acid chain; its full sequence is MGRTLAEKVWDEHVVRSTPGEPDLLYIDLHLIHEVTSPQAFDGLRLAGRTVRRPDLTLATEDHNVPTLDWDKPIADPVSKTQVDTLRRNAAEFGVRLHPLGDVEQGIVHVVGPQLGLTQPGMTIVCGDSHTSTHGAFGAIAFGIGTSEVEHVLATQTLPQAKPKTMAVTVEGSLPDGVTAKDLVLTLIAHTGTGGGQGYIVEYRGPAIEELSMEGRMTVCNMSIEWGAKAGLIAPDQTTFDYIEGRPEAPKGADWDAAVAHWKTLVTDADATFDKEIVLDASTMTPFVTWGTNPGQGVPLGGSVPDPAQYDDPSDRIAAEKACEYMGLEAGTPMRDIKVDTVFIGSCTNGRIEDLRAAAEIIKGRQVDKSTRLLVVPGSVRVRLQAQDEGLDVIFKEAGGEWRGAGCSMCLGMNPDTLQPGERSASTSNRNFEGRQGKGGRTHLVSVPVAAATAIRGTLSSPADLEPVGSN.

The [4Fe-4S] cluster site is built by Cys-347, Cys-407, and Cys-410. The disordered stretch occupies residues 417–443 (TLQPGERSASTSNRNFEGRQGKGGRTH).

Belongs to the aconitase/IPM isomerase family. LeuC type 1 subfamily. In terms of assembly, heterodimer of LeuC and LeuD. The cofactor is [4Fe-4S] cluster.

The enzyme catalyses (2R,3S)-3-isopropylmalate = (2S)-2-isopropylmalate. It participates in amino-acid biosynthesis; L-leucine biosynthesis; L-leucine from 3-methyl-2-oxobutanoate: step 2/4. Its function is as follows. Catalyzes the isomerization between 2-isopropylmalate and 3-isopropylmalate, via the formation of 2-isopropylmaleate. In Nocardioides sp. (strain ATCC BAA-499 / JS614), this protein is 3-isopropylmalate dehydratase large subunit.